A 342-amino-acid polypeptide reads, in one-letter code: tRNA dimethylallyltransferase (342 aa).

Glycine 39 to threonine 46 is an ATP binding site. Threonine 41–threonine 46 provides a ligand contact to substrate. The interval aspartate 64–glutamine 67 is interaction with substrate tRNA.

This sequence belongs to the IPP transferase family. In terms of assembly, monomer. Requires Mg(2+) as cofactor.

It catalyses the reaction adenosine(37) in tRNA + dimethylallyl diphosphate = N(6)-dimethylallyladenosine(37) in tRNA + diphosphate. Catalyzes the transfer of a dimethylallyl group onto the adenine at position 37 in tRNAs that read codons beginning with uridine, leading to the formation of N6-(dimethylallyl)adenosine (i(6)A). This is tRNA dimethylallyltransferase from Chlamydia felis (strain Fe/C-56) (Chlamydophila felis).